A 118-amino-acid polypeptide reads, in one-letter code: Holin-like protein CidA 2 (118 aa).

The next 4 membrane-spanning stretches (helical) occupy residues 5-27, 31-50, 62-84, and 88-110; these read MLLL…QGVF, MPGS…TRIL, LLVF…ESFL, and GSII…GYIS.

This sequence belongs to the CidA/LrgA family. CidA subfamily.

Its subcellular location is the cell membrane. In terms of biological role, increases the activity of extracellular murein hydrolases possibly by mediating their export via hole formation. Inhibited by the antiholin-like proteins LrgAB. In an unstressed cell, the LrgAB products probably inhibit the function of the CidA protein. When a cell is stressed by the addition of antibiotics or by other factors in the environment, CidA possibly oligomerizes within the bacterial cell membrane, creating lesions that disrupt the proton motive force, which in turn results in loss of cell viability. These lesions are also hypothesized to regulate the subsequent cell lysis by either allowing the murein hydrolases access to the cell wall substrate and/or regulating their activity by a possible change in the cell wall pH that results from loss of membrane potential. The sequence is that of Holin-like protein CidA 2 (cidA2) from Bacillus anthracis.